A 303-amino-acid polypeptide reads, in one-letter code: Elongation factor Ts (303 aa).

Residues 81 to 84 (TDFV) form an involved in Mg(2+) ion dislocation from EF-Tu region.

Belongs to the EF-Ts family.

The protein resides in the cytoplasm. Associates with the EF-Tu.GDP complex and induces the exchange of GDP to GTP. It remains bound to the aminoacyl-tRNA.EF-Tu.GTP complex up to the GTP hydrolysis stage on the ribosome. This chain is Elongation factor Ts, found in Mesomycoplasma hyopneumoniae (strain 7448) (Mycoplasma hyopneumoniae).